The chain runs to 399 residues: Elongation factor Tu (399 aa).

The 200-residue stretch at 10–209 folds into the tr-type G domain; the sequence is KPHVNIGTIG…EVDAYIPTPE (200 aa). The tract at residues 19 to 26 is G1; the sequence is GHVDHGKT. GTP is bound at residue 19–26; the sequence is GHVDHGKT. Thr-26 contributes to the Mg(2+) binding site. Positions 60–64 are G2; that stretch reads GITIA. Positions 81-84 are G3; the sequence is DCPG. Residues 81–85 and 136–139 each bind GTP; these read DCPGH and NKQD. The G4 stretch occupies residues 136–139; the sequence is NKQD. The interval 174-176 is G5; the sequence is SAL.

This sequence belongs to the TRAFAC class translation factor GTPase superfamily. Classic translation factor GTPase family. EF-Tu/EF-1A subfamily. Monomer.

The protein resides in the cytoplasm. It catalyses the reaction GTP + H2O = GDP + phosphate + H(+). Functionally, GTP hydrolase that promotes the GTP-dependent binding of aminoacyl-tRNA to the A-site of ribosomes during protein biosynthesis. In Helicobacter pylori (strain ATCC 700392 / 26695) (Campylobacter pylori), this protein is Elongation factor Tu.